We begin with the raw amino-acid sequence, 305 residues long: Ribonuclease Z (305 aa).

Zn(2+)-binding residues include histidine 61, histidine 63, aspartate 65, histidine 66, histidine 141, aspartate 209, and histidine 268. Aspartate 65 (proton acceptor) is an active-site residue.

The protein belongs to the RNase Z family. As to quaternary structure, homodimer. The cofactor is Zn(2+).

It carries out the reaction Endonucleolytic cleavage of RNA, removing extra 3' nucleotides from tRNA precursor, generating 3' termini of tRNAs. A 3'-hydroxy group is left at the tRNA terminus and a 5'-phosphoryl group is left at the trailer molecule.. In terms of biological role, zinc phosphodiesterase, which displays some tRNA 3'-processing endonuclease activity. Probably involved in tRNA maturation, by removing a 3'-trailer from precursor tRNA. The sequence is that of Ribonuclease Z from Clostridioides difficile (strain 630) (Peptoclostridium difficile).